Consider the following 229-residue polypeptide: Dephospho-CoA kinase domain-containing protein (229 aa).

The DPCK domain maps to 3-207 (LVGLTGGIAS…DCMQFLIIRA (205 aa)). 8–15 (GGIASGKS) is a binding site for ATP.

It belongs to the CoaE family.

The sequence is that of Dephospho-CoA kinase domain-containing protein (dcakd) from Danio rerio (Zebrafish).